The sequence spans 277 residues: Energy-coupling factor transporter ATP-binding protein EcfA1 (277 aa).

In terms of domain architecture, ABC transporter spans 5–243 (IRAQNVSFCY…VEVLKKIGLD (239 aa)). 42-49 (GHNGSGKS) lines the ATP pocket.

Belongs to the ABC transporter superfamily. Energy-coupling factor EcfA family. Forms a stable energy-coupling factor (ECF) transporter complex composed of 2 membrane-embedded substrate-binding proteins (S component), 2 ATP-binding proteins (A component) and 2 transmembrane proteins (T component).

Its subcellular location is the cell membrane. ATP-binding (A) component of a common energy-coupling factor (ECF) ABC-transporter complex. Unlike classic ABC transporters this ECF transporter provides the energy necessary to transport a number of different substrates. This is Energy-coupling factor transporter ATP-binding protein EcfA1 from Caldanaerobacter subterraneus subsp. tengcongensis (strain DSM 15242 / JCM 11007 / NBRC 100824 / MB4) (Thermoanaerobacter tengcongensis).